The following is a 312-amino-acid chain: Elongation factor Ts (312 aa).

Positions 84–87 (TDFL) are involved in Mg(2+) ion dislocation from EF-Tu.

This sequence belongs to the EF-Ts family.

It is found in the cytoplasm. Associates with the EF-Tu.GDP complex and induces the exchange of GDP to GTP. It remains bound to the aminoacyl-tRNA.EF-Tu.GTP complex up to the GTP hydrolysis stage on the ribosome. This Caulobacter sp. (strain K31) protein is Elongation factor Ts.